We begin with the raw amino-acid sequence, 308 residues long: Malonate utilization transcriptional regulator (308 aa).

The region spanning 9 to 66 is the HTH lysR-type domain; sequence ITFRKLSVFMMFMAKGNIARTAEAMKLSSVSVHRALHTLEEGVGCPLFVHKGRNLLPL. The segment at residues 26–45 is a DNA-binding region (H-T-H motif); it reads IARTAEAMKLSSVSVHRALH.

This sequence belongs to the LysR transcriptional regulatory family.

In terms of biological role, transcriptional regulator of the mau genes for malonate utilization. The polypeptide is Malonate utilization transcriptional regulator (mauR) (Klebsiella pneumoniae).